Reading from the N-terminus, the 528-residue chain is PC4 and SFRS1-interacting protein (528 aa).

Positions 7–64 (PGDLIFAKMKGYPHWPARVDEVPDGAVKPPTNKLPIFFFGTHETAFLGPKDIFPYSEN) constitute a PWWP domain. The disordered stretch occupies residues 61–348 (YSENKEKYGK…EKKRETSMDS (288 aa)). Residue K75 forms a Glycyl lysine isopeptide (Lys-Gly) (interchain with G-Cter in SUMO2) linkage. The segment covering 92–106 (FSSQQASTKQSNASS) has biased composition (polar residues). A phosphoserine mark is found at S102, S105, and S106. Residues 113–135 (KETNVSKEDTDQEEKASNEDVTK) are compositionally biased toward basic and acidic residues. 2 positions are modified to phosphothreonine: T115 and T122. S129 bears the Phosphoserine mark. T141 carries the post-translational modification Phosphothreonine. Residues 144 to 153 (AARRGRKRKA) show a composition bias toward basic residues. The short motif at 146–156 (RRGRKRKAEKQ) is the Nuclear localization signal element. A phosphoserine mark is found at S176 and S205. A compositionally biased stretch (basic and acidic residues) spans 212–260 (DEDKSKKKGPEEKQPKKQLKKEEEGQKEEEKPRKEPDKKEGKKEVESKR). The residue at position 270 (S270) is a Phosphoserine. T271 bears the Phosphothreonine mark. Phosphoserine is present on residues S272 and S274. Basic residues predominate over residues 285 to 300 (KRKGGRNFQAAHRRNM). Positions 303–348 (GQHEKEAGDRKRKQEEQMETEQQNKDEGKKPEVKKVEKKRETSMDS) are enriched in basic and acidic residues. Coiled coils occupy residues 306–332 (EKEA…EGKK) and 369–393 (NRCI…KHTE). The interval 338–415 (VEKKRETSMD…VSQVIMEKST (78 aa)) is integrase-binding domain (IBD). S432 carries the post-translational modification Phosphoserine. A Phosphothreonine modification is found at T435. S441 is subject to Phosphoserine. Residues 444–471 (EQRQHEEANKTKDQGKKGPNKKLEKEPT) are compositionally biased toward basic and acidic residues. Positions 444–528 (EQRQHEEANK…ISLKESTLDN (85 aa)) are disordered. The span at 472 to 492 (GTKSLNGGSDAQESNHPQHNG) shows a compositional bias: polar residues. Over residues 496-528 (EDGKDSREASSKTKPPGEEREAEISLKESTLDN) the composition is skewed to basic and acidic residues. R515 carries the post-translational modification Citrulline. Residue S520 is modified to Phosphoserine. T525 bears the Phosphothreonine mark.

Belongs to the HDGF family. In terms of assembly, monomer. Interacts with IFRD1/PC4. Interacts (via IBD domain) with POGZ (via IBM motif) and CDCA7L (via IBM motifs). Interacts (via IBD domain) with KMT2A (via IBM motifs) with a moderate affinity whereas interacts with the KMT2A-MEN1 complex with a greater affinity; MEN1 enhances interaction of KMT2A with PSIP1. Interacts (via IBD domain) with IWS1 (via IBM motif), MED1 (via IBM motif) and DBF4 (via IBM motifs). Citrullinated by PADI4.

It localises to the nucleus. Its function is as follows. Transcriptional coactivator involved in neuroepithelial stem cell differentiation and neurogenesis. Involved in particular in lens epithelial cell gene regulation and stress responses. May play an important role in lens epithelial to fiber cell terminal differentiation. May play a protective role during stress-induced apoptosis. The sequence is that of PC4 and SFRS1-interacting protein (Psip1) from Mus musculus (Mouse).